Reading from the N-terminus, the 166-residue chain is Large ribosomal subunit protein uL10 (166 aa).

Belongs to the universal ribosomal protein uL10 family. Part of the ribosomal stalk of the 50S ribosomal subunit. The N-terminus interacts with L11 and the large rRNA to form the base of the stalk. The C-terminus forms an elongated spine to which L12 dimers bind in a sequential fashion forming a multimeric L10(L12)X complex.

Functionally, forms part of the ribosomal stalk, playing a central role in the interaction of the ribosome with GTP-bound translation factors. The chain is Large ribosomal subunit protein uL10 from Ureaplasma urealyticum serovar 10 (strain ATCC 33699 / Western).